The sequence spans 333 residues: Fructose-1,6-bisphosphatase class 1 (333 aa).

Residues glutamate 92, aspartate 113, leucine 115, and aspartate 116 each coordinate Mg(2+). Substrate-binding positions include 116–119 (DGSS), asparagine 209, tyrosine 242, and lysine 272. Residue glutamate 278 coordinates Mg(2+).

Belongs to the FBPase class 1 family. As to quaternary structure, homotetramer. Mg(2+) serves as cofactor.

The protein localises to the cytoplasm. It carries out the reaction beta-D-fructose 1,6-bisphosphate + H2O = beta-D-fructose 6-phosphate + phosphate. Its pathway is carbohydrate biosynthesis; Calvin cycle. The sequence is that of Fructose-1,6-bisphosphatase class 1 from Chlorobium phaeobacteroides (strain BS1).